Here is a 285-residue protein sequence, read N- to C-terminus: MVHKKRGGVTSWLFRKSPVHNVLPLLHSWESCHQATGCGVQLCHPTARTAPQPQCPGPLAQGAAPSPSTPGSVKVASPLECSICFSGYDNIFKTPKELSCSHVFCLECLARLAAAQPAGRSGREAVPCPFCRQPTTVPVAGAPALRTSRQLQAKLPAHLQREEPVWLEGTKLCCRPLPTTSGQEDGGFVSVDVGLSKPAEPTLPVPVQDPAPNPGWLARCWARFRDWRRVALVSVLLLVLFCVILWPVQCALKTGNLRCINRPPAATATATVTTDALSFGVLANN.

The segment at 81–132 adopts an RING-type zinc-finger fold; it reads CSICFSGYDNIFKTPKELSCSHVFCLECLARLAAAQPAGRSGREAVPCPFCR. The chain crosses the membrane as a helical span at residues 230–250; sequence VALVSVLLLVLFCVILWPVQC.

It localises to the membrane. The protein is RING finger protein 223 (Rnf223) of Mus musculus (Mouse).